The chain runs to 615 residues: Chaperone protein DnaK (615 aa).

T174 is subject to Phosphothreonine; by autocatalysis. The interval 581–615 is disordered; it reads QAAPKDGAEGDAKSADDNTVDGDFEEVDPNKDDKK. Over residues 586 to 596 the composition is skewed to basic and acidic residues; the sequence is DGAEGDAKSAD. Acidic residues predominate over residues 598–607; it reads NTVDGDFEEV.

It belongs to the heat shock protein 70 family.

Acts as a chaperone. This Leuconostoc mesenteroides subsp. mesenteroides (strain ATCC 8293 / DSM 20343 / BCRC 11652 / CCM 1803 / JCM 6124 / NCDO 523 / NBRC 100496 / NCIMB 8023 / NCTC 12954 / NRRL B-1118 / 37Y) protein is Chaperone protein DnaK.